The following is a 158-amino-acid chain: Nascent polypeptide-associated complex subunit beta (158 aa).

Disordered regions lie at residues 1 to 40 (MDQA…DKKL) and 119 to 158 (ESYQ…SKVE). Basic residues predominate over residues 16 to 31 (GKGKGTPRRKTKKVHK). One can recognise an NAC-A/B domain in the interval 34–99 (GTDDKKLQTS…GEDKELTELV (66 aa)). Over residues 137–152 (DDDDDDEIPDLVEGEN) the composition is skewed to acidic residues.

Belongs to the NAC-beta family. Part of the nascent polypeptide-associated complex (NAC), consisting of EGD2 and EGD1. NAC associates with ribosomes via EGD1.

It localises to the cytoplasm. Its subcellular location is the nucleus. In terms of biological role, component of the nascent polypeptide-associated complex (NAC), a dynamic component of the ribosomal exit tunnel, protecting the emerging polypeptides from interaction with other cytoplasmic proteins to ensure appropriate nascent protein targeting. The NAC complex also promotes mitochondrial protein import by enhancing productive ribosome interactions with the outer mitochondrial membrane and blocks the inappropriate interaction of ribosomes translating non-secretory nascent polypeptides with translocation sites in the membrane of the endoplasmic reticulum. EGD1 may act as a transcription factor that exert a negative effect on the expression of several genes that are transcribed by RNA polymerase II. The polypeptide is Nascent polypeptide-associated complex subunit beta (EGD1) (Ajellomyces capsulatus (strain NAm1 / WU24) (Darling's disease fungus)).